A 309-amino-acid polypeptide reads, in one-letter code: Probable lipid kinase YegS-like (309 aa).

Positions 1 to 133 (MPLTHIRLLL…IDIIRANNNY (133 aa)) constitute a DAGKc domain. ATP-binding positions include serine 39, 65–71 (GDGSLNE), and threonine 95. Residues leucine 214, aspartate 217, and leucine 219 each contribute to the Mg(2+) site. Glutamate 273 acts as the Proton acceptor in catalysis.

It belongs to the diacylglycerol/lipid kinase family. YegS lipid kinase subfamily. Mg(2+) serves as cofactor. The cofactor is Ca(2+).

The protein resides in the cytoplasm. Functionally, probably phosphorylates lipids; the in vivo substrate is unknown. This is Probable lipid kinase YegS-like from Shewanella frigidimarina (strain NCIMB 400).